The following is a 1033-amino-acid chain: Probable LRR receptor-like serine/threonine-protein kinase At1g56140 (1033 aa).

The first 28 residues, 1-28 (MLRLWRYLCLLLTVWFLCNFGPVYVVRA), serve as a signal peptide directing secretion. Topologically, residues 29-636 (QNRTGATTHP…PSKGKSMTGT (608 aa)) are extracellular. N-linked (GlcNAc...) asparagine glycosylation is found at N30, N60, and N94. LRR repeat units follow at residues 97–121 (ICRITNIKVYAMEVVGSIPQQLWTL), 122–145 (EYLTNLNLGQNVLTGSLPPALGNL), 147–169 (RMRWMTFGINALSGPIPKEIGLL), 170–193 (TDLRLLSISSNNFSGSIPDEIGRC), 195–217 (KLQQIYIDSSGLSGGLPVSFANL), 241–264 (WTKLTTLRILGTGLSGPIPASFSN), 265–288 (LTSLTELRLGDISNGNSSLEFIKD), 289–313 (MKSLSILVLRNNNLTGTIPSNIGEY), 314–337 (SSLRQLDLSFNKLHGTIPASLFNL), 339–361 (QLTHLFLGNNTLNGSLPTQKGQS), 363–382 (SNVDVSYNDLSGSLPSWVSL), 383–406 (PNLNLNLVANNFTLEGLDNRVLSG), and 422–445 (IYSDFSINCGGPEIRSVTEAVFER). N144 carries N-linked (GlcNAc...) asparagine glycosylation. An N-linked (GlcNAc...) asparagine glycan is attached at N181. N-linked (GlcNAc...) asparagine glycosylation is found at N264, N280, and N301. N-linked (GlcNAc...) asparagine glycans are attached at residues N347 and N351. N393 is a glycosylation site (N-linked (GlcNAc...) asparagine). Residue N579 is glycosylated (N-linked (GlcNAc...) asparagine). Residues 637–657 (IVGVIVGVGLLSIISGVVIFI) traverse the membrane as a helical segment. Over 658–1033 (IRKRRKRYTD…MLGAQMNEGR (376 aa)) the chain is Cytoplasmic. T682 carries the phosphothreonine modification. One can recognise a Protein kinase domain in the interval 693–951 (FDPSNKLGEG…LCTQTSHALR (259 aa)). Residues 699–707 (LGEGGFGPV) and K721 each bind ATP. Y766 is modified (phosphotyrosine). The active-site Proton acceptor is the D817. A phosphoserine mark is found at S821 and S850. Residues T851 and T856 each carry the phosphothreonine modification. Phosphotyrosine is present on Y864. The segment at 1012 to 1033 (SEISPRNNDARPMLGAQMNEGR) is disordered.

Belongs to the protein kinase superfamily. Ser/Thr protein kinase family.

The protein localises to the membrane. The catalysed reaction is L-seryl-[protein] + ATP = O-phospho-L-seryl-[protein] + ADP + H(+). It carries out the reaction L-threonyl-[protein] + ATP = O-phospho-L-threonyl-[protein] + ADP + H(+). This Arabidopsis thaliana (Mouse-ear cress) protein is Probable LRR receptor-like serine/threonine-protein kinase At1g56140.